A 451-amino-acid polypeptide reads, in one-letter code: Phosphoglucosamine mutase (451 aa).

The active-site Phosphoserine intermediate is S102. S102, D242, D244, and D246 together coordinate Mg(2+). S102 is subject to Phosphoserine.

Belongs to the phosphohexose mutase family. It depends on Mg(2+) as a cofactor. Post-translationally, activated by phosphorylation.

The enzyme catalyses alpha-D-glucosamine 1-phosphate = D-glucosamine 6-phosphate. Functionally, catalyzes the conversion of glucosamine-6-phosphate to glucosamine-1-phosphate. In Staphylococcus epidermidis (strain ATCC 35984 / DSM 28319 / BCRC 17069 / CCUG 31568 / BM 3577 / RP62A), this protein is Phosphoglucosamine mutase.